The sequence spans 492 residues: Adenosylhomocysteinase (492 aa).

Substrate is bound by residues Thr-68, Asp-153, and Glu-215. Thr-216–Thr-218 lines the NAD(+) pocket. Positions 245 and 249 each coordinate substrate. NAD(+)-binding positions include Asn-250, Gly-279 to Gly-284, Glu-302, Asn-337, Ile-358 to His-360, and Asn-406.

This sequence belongs to the adenosylhomocysteinase family. NAD(+) is required as a cofactor.

The protein localises to the cytoplasm. The catalysed reaction is S-adenosyl-L-homocysteine + H2O = L-homocysteine + adenosine. It participates in amino-acid biosynthesis; L-homocysteine biosynthesis; L-homocysteine from S-adenosyl-L-homocysteine: step 1/1. Its function is as follows. May play a key role in the regulation of the intracellular concentration of adenosylhomocysteine. This Mycobacterium leprae (strain Br4923) protein is Adenosylhomocysteinase.